A 934-amino-acid polypeptide reads, in one-letter code: Bifunctional uridylyltransferase/uridylyl-removing enzyme (934 aa).

The interval 1-379 (MSAHDLKLEE…TFSRRKRKLS (379 aa)) is uridylyltransferase. Residues 380-736 (DDGAFISENH…AKPHAFEAVT (357 aa)) form a uridylyl-removing region. In terms of domain architecture, HD spans 496–613 (VDEHLLRCIA…IDFADTVQTM (118 aa)). 2 consecutive ACT domains span residues 737–818 (EITV…DMLA) and 848–931 (VIEV…RSPQ).

It belongs to the GlnD family. Mg(2+) is required as a cofactor.

The enzyme catalyses [protein-PII]-L-tyrosine + UTP = [protein-PII]-uridylyl-L-tyrosine + diphosphate. It carries out the reaction [protein-PII]-uridylyl-L-tyrosine + H2O = [protein-PII]-L-tyrosine + UMP + H(+). Its activity is regulated as follows. Uridylyltransferase (UTase) activity is inhibited by glutamine, while glutamine activates uridylyl-removing (UR) activity. Functionally, modifies, by uridylylation and deuridylylation, the PII regulatory proteins (GlnB and homologs), in response to the nitrogen status of the cell that GlnD senses through the glutamine level. Under low glutamine levels, catalyzes the conversion of the PII proteins and UTP to PII-UMP and PPi, while under higher glutamine levels, GlnD hydrolyzes PII-UMP to PII and UMP (deuridylylation). Thus, controls uridylylation state and activity of the PII proteins, and plays an important role in the regulation of nitrogen assimilation and metabolism. This Brucella abortus (strain S19) protein is Bifunctional uridylyltransferase/uridylyl-removing enzyme.